Reading from the N-terminus, the 197-residue chain is COMM domain-containing protein 6 (197 aa).

Positions 130-197 constitute a COMM domain; sequence ELVDFHWKIG…KEMSAVLETV (68 aa).

This sequence belongs to the COMM domain-containing protein 6 family. Component of the commander complex consisting of the CCC subcomplex and the retriever subcomplex. Component of the CCC subcomplex.

The protein resides in the nucleus. It is found in the cytoplasm. Scaffold protein in the commander complex that is essential for endosomal recycling of transmembrane cargos; the commander complex is composed of the CCC subcomplex and the retriever subcomplex. May modulate activity of cullin-RING E3 ubiquitin ligase (CRL) complexes. Down-regulates activation of NF-kappa-B. Inhibits TNF-induced NFKB1 activation. This chain is COMM domain-containing protein 6 (commd6), found in Xenopus laevis (African clawed frog).